The chain runs to 224 residues: Ribosomal RNA large subunit methyltransferase E (224 aa).

5 residues coordinate S-adenosyl-L-methionine: glycine 64, tryptophan 66, aspartate 97, aspartate 113, and aspartate 138. Lysine 178 acts as the Proton acceptor in catalysis.

It belongs to the class I-like SAM-binding methyltransferase superfamily. RNA methyltransferase RlmE family.

The protein resides in the cytoplasm. It carries out the reaction uridine(2552) in 23S rRNA + S-adenosyl-L-methionine = 2'-O-methyluridine(2552) in 23S rRNA + S-adenosyl-L-homocysteine + H(+). Its function is as follows. Specifically methylates the uridine in position 2552 of 23S rRNA at the 2'-O position of the ribose in the fully assembled 50S ribosomal subunit. This Albidiferax ferrireducens (strain ATCC BAA-621 / DSM 15236 / T118) (Rhodoferax ferrireducens) protein is Ribosomal RNA large subunit methyltransferase E.